The sequence spans 388 residues: Chalcone synthase DIV (388 aa).

C164 is an active-site residue.

Belongs to the thiolase-like superfamily. Chalcone/stilbene synthases family.

The catalysed reaction is (E)-4-coumaroyl-CoA + 3 malonyl-CoA + 3 H(+) = 2',4,4',6'-tetrahydroxychalcone + 3 CO2 + 4 CoA. It functions in the pathway secondary metabolite biosynthesis; flavonoid biosynthesis. Its function is as follows. The primary product of this enzyme is 4,2',4',6'-tetrahydroxychalcone (also termed naringenin-chalcone or chalcone) which can under specific conditions spontaneously isomerize into naringenin. In Ipomoea batatas (Sweet potato), this protein is Chalcone synthase DIV (CHS-DIV).